Reading from the N-terminus, the 382-residue chain is Probable G-protein coupled receptor 132 (382 aa).

Residues 1 to 42 (MRSEPTNAAGNTTLGVTSVLQSTSVPSSETCHVSYEESRVVL) are Extracellular-facing. Asparagine 11 carries an N-linked (GlcNAc...) asparagine glycan. Residues 43–65 (VVVYSAVCLLGLPANCLTAWLTL) traverse the membrane as a helical segment. The Cytoplasmic segment spans residues 66–76 (LQVLQRNVLAV). A helical transmembrane segment spans residues 77–99 (YLFCLSLCELLYISTVPLWIIYI). The Extracellular portion of the chain corresponds to 100–113 (QNQHKWNLGPQACK). An intrachain disulfide couples cysteine 112 to cysteine 184. The helical transmembrane segment at 114-135 (VTAYIFFCNIYISILLLCCISC) threads the bilayer. The Cytoplasmic portion of the chain corresponds to 136–155 (DRYMAVVYALESRGHRHQRT). A helical membrane pass occupies residues 156 to 175 (AVTISACVILLVGLVNYPVF). The Extracellular portion of the chain corresponds to 176-198 (DMKVEKSFCFEPLRMNSKIAGYH). The helical transmembrane segment at 199 to 221 (YLRFTFGFAIPLGILAFTNHQIF) threads the bilayer. Residues 222–241 (RSIKLSDSLSAAQKNKVKRS) lie on the Cytoplasmic side of the membrane. A helical membrane pass occupies residues 242–261 (AIAVVTIFLVCFAPYHVVLL). Residues 262–286 (VKAASFSFYQGDMDAVCAFESRLYT) lie on the Extracellular side of the membrane. A helical membrane pass occupies residues 287-309 (VSMVFLCLSTVNSVADPIIYVLG). The Cytoplasmic portion of the chain corresponds to 310–382 (TDHSRQEVSR…SPERLPEELC (73 aa)).

The protein belongs to the G-protein coupled receptor 1 family. Highly expressed in hematopoietic tissues rich in lymphocytes like spleen and thymus. Weakly expressed in heart and lung. Highly expressed in infiltrating macrophages within atherosclerotic lesions.

The protein localises to the cell membrane. Functionally, may be a receptor for oxidized free fatty acids derived from linoleic and arachidonic acids such as 9-hydroxyoctadecadienoic acid (9-HODE). Activates a G alpha protein, most likely G alpha(q). May be involved in apoptosis. Functions at the G2/M checkpoint to delay mitosis. May function as a sensor that monitors the oxidative states and mediates appropriate cellular responses such as secretion of paracrine signals and attenuation of proliferation. May mediate ths accumulation of intracellular inositol phosphates at acidic pH through proton-sensing activity. The sequence is that of Probable G-protein coupled receptor 132 (Gpr132) from Mus musculus (Mouse).